A 910-amino-acid chain; its full sequence is Periodic tryptophan protein 2 homolog (910 aa).

WD repeat units follow at residues 12–50 (GTVYRDGQVAFSKDGYSVISPIGNKLSIFDLRNNTSKTL), 53–92 (DCNYNIKRLSISPSGYHLLASDERGVVHFVHLLSEFKIYT), 94–134 (RSNK…KVYN), 144–183 (LSSDSLKTIDWSDDANLLVSGGEDRVVRVVGAKDFKNLFI), 188–227 (SHKGYIVNCQFMKNSYDMITVCKRGLANVWTCNLRPGELV), 271–310 (GKSVDVTAARFHKETNILATAFNNGVIVLHEIPSFALVHN), 313–355 (VSEM…YVMK), 358–397 (AHSLRITTAEYSPDGSLMATGAEDGKVKIWNSRSSFCTVT), 400–439 (EHTSGVTAVKWTQSGRAILSASLDGTVRAHDLKRYRNFRT), 443–485 (PEPT…DILS), 486–523 (GHESAISSIDIHGNHIVSGSWDRTIKMWTIVDSQAETV), 525–563 (VSHEALDVKFSPAGDEIAVLTSDGVITFFEAKEMINLGS), 586–625 (AKTKTFTRIRFSPDGNLLLAGGESNNFCLYSVPERMILKK), and 688–728 (RPEV…DPFQ). Positions 867-910 (SKKSVKKEEEEEEDVSDESDDEDIEDESAGSDDEDSDDSVEIIE) are disordered. Residues 875 to 910 (EEEEEDVSDESDDEDIEDESAGSDDEDSDDSVEIIE) show a composition bias toward acidic residues.

Belongs to the WD repeat PWP2 family.

This Caenorhabditis elegans protein is Periodic tryptophan protein 2 homolog.